The following is a 222-amino-acid chain: MISAKEQAKKGQIIYRYILLKIQSFKWPAGTRIFSERQLEIRFASSRSLIRTILNTLLGKDLIRHTKGNAGYFVAKNAGFSFFHKTQDNKLPKWAKLSTLMKNHLREVDRDVFSSIDSGVDFGNFKGLEAKLFDENKKNFLNLSFFGKDDVLQIFSEQNLQEQFFKDFAYNGIVVERKSSLICVDDETKNLLIYDLFYDDNNKFIVAMRSEYLNPRIKIINA.

The 70-residue stretch at 8–77 (AKKGQIIYRY…GNAGYFVAKN (70 aa)) folds into the HTH gntR-type domain.

This is an uncharacterized protein from Mycoplasma pneumoniae (strain ATCC 29342 / M129 / Subtype 1) (Mycoplasmoides pneumoniae).